Reading from the N-terminus, the 65-residue chain is Protein C' (65 aa).

This sequence belongs to the rhabdoviruses C protein family.

Functionally, seems to stimulates transcription by the viral polymerase. May play a role in viral pathogenesis or transmission by insects vectors. The sequence is that of Protein C' (P) from Aedes (Bovine).